A 229-amino-acid chain; its full sequence is Platelet-activating factor acetylhydrolase IB subunit alpha2 (229 aa).

Active-site residues include Ser48, Asp193, and His196.

The protein belongs to the 'GDSL' lipolytic enzyme family. Platelet-activating factor acetylhydrolase IB beta/gamma subunits subfamily. In terms of assembly, forms a catalytic dimer which is either homodimer (alpha2/alpha2 homodimer) or heterodimer with PAFAH1B3 (alpha2/alpha1 heterodimer). Component of the cytosolic (PAF-AH (I)) heterotetrameric enzyme, which is composed of PAFAH1B1 (beta), PAFAH1B2 (alpha2) and PAFAH1B3 (alpha1) subunits. The catalytic activity of the enzyme resides in the alpha1 (PAFAH1B3) and alpha2 (PAFAH1B2) subunits, whereas the beta subunit (PAFAH1B1) has regulatory activity. Trimer formation is not essential for the catalytic activity.

The protein resides in the cytoplasm. It catalyses the reaction a 1-O-alkyl-2-acetyl-sn-glycero-3-phosphocholine + H2O = a 1-O-alkyl-sn-glycero-3-phosphocholine + acetate + H(+). The catalysed reaction is 1-O-hexadecyl-2-acetyl-sn-glycero-3-phosphocholine + H2O = 1-O-hexadecyl-sn-glycero-3-phosphocholine + acetate + H(+). The enzyme catalyses 1-O-hexadecyl-2-acetyl-sn-glycero-3-phosphate + H2O = 1-O-hexadecyl-sn-glycero-3-phosphate + acetate + H(+). It carries out the reaction 1-O-hexadecyl-2-acetyl-sn-glycero-3-phosphoethanolamine + H2O = 1-O-hexadecyl-sn-glycero-3-phosphoethanolamine + acetate + H(+). Functionally, alpha2 catalytic subunit of the cytosolic type I platelet-activating factor (PAF) acetylhydrolase (PAF-AH (I)) heterotetrameric enzyme that catalyzes the hydrolyze of the acetyl group at the sn-2 position of PAF and its analogs and modulates the action of PAF. This Gallus gallus (Chicken) protein is Platelet-activating factor acetylhydrolase IB subunit alpha2 (PAFAH1B2).